Consider the following 235-residue polypeptide: Protein GrpE (235 aa).

Residues 1 to 18 (MTDGNQKPDGNSGEQVTV) show a composition bias toward polar residues. Disordered stretches follow at residues 1–50 (MTDG…DAAH) and 198–235 (ESVD…PSGS). Residues 19-35 (TDKRRIDPETGEVRHVP) are compositionally biased toward basic and acidic residues. A compositionally biased stretch (polar residues) spans 215–235 (ADQGNSADTSGEQAESEPSGS).

This sequence belongs to the GrpE family. As to quaternary structure, homodimer.

It is found in the cytoplasm. In terms of biological role, participates actively in the response to hyperosmotic and heat shock by preventing the aggregation of stress-denatured proteins, in association with DnaK and GrpE. It is the nucleotide exchange factor for DnaK and may function as a thermosensor. Unfolded proteins bind initially to DnaJ; upon interaction with the DnaJ-bound protein, DnaK hydrolyzes its bound ATP, resulting in the formation of a stable complex. GrpE releases ADP from DnaK; ATP binding to DnaK triggers the release of the substrate protein, thus completing the reaction cycle. Several rounds of ATP-dependent interactions between DnaJ, DnaK and GrpE are required for fully efficient folding. This Mycobacterium tuberculosis (strain ATCC 25177 / H37Ra) protein is Protein GrpE.